Consider the following 925-residue polypeptide: Nuclear pore complex protein Nup107 (925 aa).

Met1 is subject to N-acetylmethionine. Phosphoserine is present on residues Ser4, Ser10, Ser11, and Ser37. Positions 20 to 66 (TRTARKQSAQKRVLLQASQDENFGNTTPRNQVIPRTPSSFRQPFTPT) are disordered. Polar residues-rich tracts occupy residues 35 to 49 (QASQ…TPRN) and 55 to 66 (TPSSFRQPFTPT). 2 positions are modified to phosphothreonine: Thr46 and Thr55. A phosphoserine mark is found at Ser57 and Ser58. Arg60 carries the post-translational modification Asymmetric dimethylarginine; alternate. Position 60 is an omega-N-methylarginine; alternate (Arg60). The residue at position 64 (Thr64) is a Phosphothreonine. Omega-N-methylarginine is present on Arg68. Ser69 and Ser86 each carry phosphoserine.

It belongs to the nucleoporin Nup84/Nup107 family. In terms of assembly, part of the nuclear pore complex (NPC). Forms part of the Nup160 subcomplex in the nuclear pore which is composed of NUP160, NUP133, NUP107 and Nup96; this complex plays a role in RNA export and in tethering Nup98 and NUP153 to the nucleus. Does not interact with TPR. Interacts with ZNF106. In terms of tissue distribution, ubiquitously expressed in fetal and adult tissues.

It is found in the nucleus membrane. The protein resides in the nucleus. The protein localises to the nuclear pore complex. It localises to the chromosome. Its subcellular location is the centromere. It is found in the kinetochore. Plays a role in the nuclear pore complex (NPC) assembly and/or maintenance. Required for the assembly of peripheral proteins into the NPC. May anchor NUP62 to the NPC. Involved in nephrogenesis. This chain is Nuclear pore complex protein Nup107 (NUP107), found in Homo sapiens (Human).